A 208-amino-acid chain; its full sequence is Large ribosomal subunit protein bL25 (208 aa).

The segment at 184 to 208 (VTISGTSSDQDTSGGESSGTTTSED) is disordered. A compositionally biased stretch (low complexity) spans 187–208 (SGTSSDQDTSGGESSGTTTSED).

It belongs to the bacterial ribosomal protein bL25 family. CTC subfamily. In terms of assembly, part of the 50S ribosomal subunit; part of the 5S rRNA/L5/L18/L25 subcomplex. Contacts the 5S rRNA. Binds to the 5S rRNA independently of L5 and L18.

In terms of biological role, this is one of the proteins that binds to the 5S RNA in the ribosome where it forms part of the central protuberance. This chain is Large ribosomal subunit protein bL25, found in Ehrlichia ruminantium (strain Gardel).